A 434-amino-acid chain; its full sequence is GTPase Der (434 aa).

EngA-type G domains follow at residues 3–167 (NIVA…PEIE) and 175–350 (PRFA…ESRS). GTP contacts are provided by residues 9-16 (GRPNVGKS), 56-60 (DTGGY), 119-122 (NKVD), 181-188 (GRPNAGKS), 228-232 (DTAGI), and 293-296 (NKWD). The KH-like domain occupies 351–434 (KKIKTRQFND…VPISIFFRKK (84 aa)).

Belongs to the TRAFAC class TrmE-Era-EngA-EngB-Septin-like GTPase superfamily. EngA (Der) GTPase family. Associates with the 50S ribosomal subunit.

Its function is as follows. GTPase that plays an essential role in the late steps of ribosome biogenesis. The protein is GTPase Der of Christiangramia forsetii (strain DSM 17595 / CGMCC 1.15422 / KT0803) (Gramella forsetii).